A 510-amino-acid chain; its full sequence is GMP synthase [glutamine-hydrolyzing] (510 aa).

The Glutamine amidotransferase type-1 domain maps to 3–194 (QILILDFGSQ…ARVICGYKEK (192 aa)). The active-site Nucleophile is Cys-80. Active-site residues include His-168 and Glu-170. The GMPS ATP-PPase domain occupies 195–385 (WTPASIMTAS…LGLGSEIVDI (191 aa)). Position 222–228 (222–228 (SGGVDSS)) interacts with ATP.

In terms of assembly, homodimer.

It catalyses the reaction XMP + L-glutamine + ATP + H2O = GMP + L-glutamate + AMP + diphosphate + 2 H(+). The protein operates within purine metabolism; GMP biosynthesis; GMP from XMP (L-Gln route): step 1/1. Catalyzes the synthesis of GMP from XMP. The polypeptide is GMP synthase [glutamine-hydrolyzing] (Elusimicrobium minutum (strain Pei191)).